Reading from the N-terminus, the 363-residue chain is 3-dehydroquinate synthase (363 aa).

NAD(+) is bound by residues 109 to 113 (GATTD), 133 to 134 (TT), K146, and K155. E188, H251, and H267 together coordinate Zn(2+).

This sequence belongs to the sugar phosphate cyclases superfamily. Dehydroquinate synthase family. It depends on NAD(+) as a cofactor. The cofactor is Co(2+). Zn(2+) is required as a cofactor.

Its subcellular location is the cytoplasm. The catalysed reaction is 7-phospho-2-dehydro-3-deoxy-D-arabino-heptonate = 3-dehydroquinate + phosphate. The protein operates within metabolic intermediate biosynthesis; chorismate biosynthesis; chorismate from D-erythrose 4-phosphate and phosphoenolpyruvate: step 2/7. Its function is as follows. Catalyzes the conversion of 3-deoxy-D-arabino-heptulosonate 7-phosphate (DAHP) to dehydroquinate (DHQ). In Streptomyces avermitilis (strain ATCC 31267 / DSM 46492 / JCM 5070 / NBRC 14893 / NCIMB 12804 / NRRL 8165 / MA-4680), this protein is 3-dehydroquinate synthase.